The chain runs to 461 residues: Argininosuccinate lyase (461 aa).

Belongs to the lyase 1 family. Argininosuccinate lyase subfamily.

It localises to the cytoplasm. It catalyses the reaction 2-(N(omega)-L-arginino)succinate = fumarate + L-arginine. It participates in amino-acid biosynthesis; L-arginine biosynthesis; L-arginine from L-ornithine and carbamoyl phosphate: step 3/3. This Dehalococcoides mccartyi (strain ATCC BAA-2100 / JCM 16839 / KCTC 5957 / BAV1) protein is Argininosuccinate lyase.